The primary structure comprises 313 residues: Fructose-1,6-bisphosphatase class 1 (313 aa).

4 residues coordinate Mg(2+): E90, D111, L113, and D114. Substrate-binding positions include 114–117, Y222, and K253; that span reads DGSS. E259 provides a ligand contact to Mg(2+).

Belongs to the FBPase class 1 family. In terms of assembly, homotetramer. It depends on Mg(2+) as a cofactor.

The protein localises to the cytoplasm. It catalyses the reaction beta-D-fructose 1,6-bisphosphate + H2O = beta-D-fructose 6-phosphate + phosphate. The protein operates within carbohydrate biosynthesis; gluconeogenesis. This Geotalea uraniireducens (strain Rf4) (Geobacter uraniireducens) protein is Fructose-1,6-bisphosphatase class 1.